A 632-amino-acid polypeptide reads, in one-letter code: Maltase 1 (632 aa).

Residues 1-29 show a composition bias toward basic and acidic residues; sequence MEEGERWREGHVYQRSSETRKPTNYDRPD. Residues 1-30 are disordered; the sequence is MEEGERWREGHVYQRSSETRKPTNYDRPDS. N-linked (GlcNAc...) asparagine glycans are attached at residues asparagine 179 and asparagine 212. Catalysis depends on aspartate 280, which acts as the Nucleophile. Asparagine 333 is a glycosylation site (N-linked (GlcNAc...) asparagine). Glutamate 348 acts as the Proton donor in catalysis. N-linked (GlcNAc...) asparagine glycans are attached at residues asparagine 461, asparagine 575, and asparagine 578.

The protein belongs to the glycosyl hydrolase 13 family.

The enzyme catalyses Hydrolysis of terminal, non-reducing (1-&gt;4)-linked alpha-D-glucose residues with release of alpha-D-glucose.. The polypeptide is Maltase 1 (Mal-B1) (Drosophila virilis (Fruit fly)).